Here is a 356-residue protein sequence, read N- to C-terminus: Heat-inducible transcription repressor HrcA (356 aa).

The protein belongs to the HrcA family.

In terms of biological role, negative regulator of class I heat shock genes (grpE-dnaK-dnaJ and groELS operons). Prevents heat-shock induction of these operons. The polypeptide is Heat-inducible transcription repressor HrcA (Bartonella quintana (strain Toulouse) (Rochalimaea quintana)).